A 135-amino-acid chain; its full sequence is MEGIIICIKLGVVFLGTLFTWIFGAWDMPIVTLLVFIFLDYLTGVIKGCKSKELCSNIGLRGITKKGLILVVLLVAVMLDRLLDNGAWMFRTLIAYFYIMNEGISILENCAALGVPIPEFLRQALKQLNNKNNIK.

Helical transmembrane passes span 4 to 24 (IIIC…WIFG), 26 to 46 (WDMP…TGVI), 68 to 88 (LILV…NGAW), and 93 to 113 (LIAY…CAAL).

It belongs to the bacteriophage holin family. Cp-1 holin subfamily.

It localises to the cell membrane. This is an uncharacterized protein from Clostridium perfringens (strain 13 / Type A).